The sequence spans 266 residues: Putative carbamate hydrolase RutD (266 aa).

One can recognise an AB hydrolase-1 domain in the interval 14–115; sequence PVVVLISGLG…TMLVSVNGWL (102 aa).

This sequence belongs to the AB hydrolase superfamily. Hydrolase RutD family.

The enzyme catalyses carbamate + 2 H(+) = NH4(+) + CO2. Functionally, involved in pyrimidine catabolism. May facilitate the hydrolysis of carbamate, a reaction that can also occur spontaneously. In Shigella flexneri serotype X (strain 2002017), this protein is Putative carbamate hydrolase RutD.